Here is a 25-residue protein sequence, read N- to C-terminus: ATVKVTLVKSLNGRIANHKAXVXGL.

This sequence belongs to the universal ribosomal protein uL30 family. Part of the 50S ribosomal subunit.

The sequence is that of Large ribosomal subunit protein uL30 (rpmD) from Pseudomonas putida (Arthrobacter siderocapsulatus).